We begin with the raw amino-acid sequence, 706 residues long: Polycomb protein SCMH1 (706 aa).

2 MBT repeats span residues 28-126 (FTWD…LQPP) and 134-235 (SSWP…LQPP). Disordered stretches follow at residues 233–350 (QPPG…TVPS) and 576–595 (GSDRHLESRDPPRLSGRDPS). Basic residues-rich tracts occupy residues 272 to 283 (RGRKPGKKRGRT) and 304 to 319 (FPKKRGPKPGSKRKPR). Residues 329–340 (PTTSTPEPDTST) show a composition bias toward low complexity. Residues 576 to 591 (GSDRHLESRDPPRLSG) show a composition bias toward basic and acidic residues. The SAM domain occupies 597–662 (WTVEDVMQFV…SFHIDRLKQV (66 aa)).

The protein belongs to the SCM family. Associates with a PRC1-like complex. Interacts with the SAM domain of PHC1 via its SAM domain in vitro. In terms of tissue distribution, most abundant in testis. Moderate levels detected in heart, brain, lung, liver, skeletal muscle and kidney and lower levels in spleen.

The protein localises to the nucleus. Associates with Polycomb group (PcG) multiprotein complexes; the complex class is required to maintain the transcriptionally repressive state of some genes. This is Polycomb protein SCMH1 from Mus musculus (Mouse).